The following is a 329-amino-acid chain: G-protein coupled bile acid receptor 1 (329 aa).

The Extracellular segment spans residues 1 to 18 (MMSHNTTELSAIPRGVQE). Asn5 is a glycosylation site (N-linked (GlcNAc...) asparagine). A helical membrane pass occupies residues 19 to 39 (LSLVLASLIVIANLLLALGIV). Over 40–49 (LDRHLRSPPA) the chain is Cytoplasmic. The helical transmembrane segment at 50–70 (GCFFLSLLLAGLLTGLALPTL) threads the bilayer. At 71-84 (PGLWNRSHQGYWSC) the chain is on the extracellular side. Asn75 carries N-linked (GlcNAc...) asparagine glycosylation. Cys84 and Cys154 are disulfide-bonded. Residues 85-105 (LLLHLAPNFCFLSLLANLLLV) traverse the membrane as a helical segment. Over 106-124 (HGERYMAVLQPLRPHGSVR) the chain is Cytoplasmic. The helical transmembrane segment at 125–145 (LALFLTWISSLLFASLPALGW) threads the bilayer. The Extracellular portion of the chain corresponds to 146–157 (NHWSPGANCSSQ). The N-linked (GlcNAc...) asparagine glycan is linked to Asn153. The chain crosses the membrane as a helical span at residues 158-178 (AIFPAPYLYLEVYGLLLPAVG). The Cytoplasmic segment spans residues 179–229 (ATALLSVRVLATAHHQLREIRRLERAVCRDAPSTLARALTWRQARAQAGAT). A helical membrane pass occupies residues 230–250 (LLFLLCWGPYVATLLLSVLAY). Topologically, residues 251-260 (ERRPPLGPVT) are extracellular. A helical transmembrane segment spans residues 261 to 281 (LLSLISLGSASAAVVPVAMGL). Topologically, residues 282-329 (GDQRYTAPWRTAAQRWLQVLRGRPKRANPGPSTAYHSSSQCSTDLDLN) are cytoplasmic. The interval 306 to 329 (KRANPGPSTAYHSSSQCSTDLDLN) is disordered. Residues 311 to 329 (GPSTAYHSSSQCSTDLDLN) are compositionally biased toward polar residues.

It belongs to the G-protein coupled receptor 1 family.

It is found in the cell membrane. Functionally, receptor for bile acid. Bile acid-binding induces its internalization, activation of extracellular signal-regulated kinase and intracellular cAMP production. May be involved in the suppression of macrophage functions by bile acids. Involved in bile acid promoted GLP1R secretion. The sequence is that of G-protein coupled bile acid receptor 1 (Gpbar1) from Rattus norvegicus (Rat).